Reading from the N-terminus, the 214-residue chain is Hypoxanthine-guanine phosphoribosyltransferase (214 aa).

The residue at position 2 (A2) is an N-acetylalanine. K69 contributes to the GMP binding site. K103 is modified (N6-acetyllysine). A Glycyl lysine isopeptide (Lys-Gly) (interchain with G-Cter in SUMO1); alternate cross-link involves residue K115. A Glycyl lysine isopeptide (Lys-Gly) (interchain with G-Cter in SUMO2); alternate cross-link involves residue K115. Residues 134 to 142, K166, 186 to 188, and D194 each bind GMP; these read EDIIDTGKT and KFV. The active-site Proton acceptor is D138. T142 is modified (phosphothreonine). A Mg(2+)-binding site is contributed by D194.

It belongs to the purine/pyrimidine phosphoribosyltransferase family. In terms of assembly, homotetramer. Mg(2+) is required as a cofactor.

The protein resides in the cytoplasm. The enzyme catalyses IMP + diphosphate = hypoxanthine + 5-phospho-alpha-D-ribose 1-diphosphate. It catalyses the reaction GMP + diphosphate = guanine + 5-phospho-alpha-D-ribose 1-diphosphate. The protein operates within purine metabolism; IMP biosynthesis via salvage pathway; IMP from hypoxanthine: step 1/1. In terms of biological role, converts guanine to guanosine monophosphate, and hypoxanthine to inosine monophosphate. Transfers the 5-phosphoribosyl group from 5-phosphoribosylpyrophosphate onto the purine. Plays a central role in the generation of purine nucleotides through the purine salvage pathway. The chain is Hypoxanthine-guanine phosphoribosyltransferase (Hprt1) from Mus spretus (Western Mediterranean mouse).